A 328-amino-acid chain; its full sequence is PDZ and LIM domain protein 1 (328 aa).

An N-acetylthreonine modification is found at T2. The PDZ domain maps to 3-85 (TLQIVLQGPG…NMTLTVARSE (83 aa)). A phosphoserine mark is found at S90 and S130. Y144 bears the Phosphotyrosine mark. The 60-residue stretch at 257-316 (PMCDKCGTGIVGVFVKLRERHRHPECYVCTDCGTNLKQKGHFFVEDQIYCEKHARERVTP) folds into the LIM zinc-binding domain. Zn(2+) is bound by residues C259, C262, H279, C282, C285, C288, C306, and H309. Position 315 is a phosphothreonine (T315). Y320 is subject to Phosphotyrosine.

In terms of assembly, interacts with ACTN1, ACTN2 and ACTN4. Interacts with PDLIM4.

It localises to the cytoplasm. Its subcellular location is the cytoskeleton. The protein resides in the myofibril. It is found in the sarcomere. The protein localises to the z line. In terms of biological role, cytoskeletal protein that may act as an adapter that brings other proteins (like kinases) to the cytoskeleton. Involved in assembly, disassembly and directioning of stress fibers in fibroblasts. Required for the localization of ACTN1 and PALLD to stress fibers. Required for cell migration and in maintaining cell polarity of fibroblasts. In Bos taurus (Bovine), this protein is PDZ and LIM domain protein 1 (PDLIM1).